The sequence spans 284 residues: Acetyl-coenzyme A carboxylase carboxyl transferase subunit beta (284 aa).

The CoA carboxyltransferase N-terminal domain maps to 24 to 284 (GLWYKSPTGK…LDLILNNEVR (261 aa)).

It belongs to the AccD/PCCB family. Acetyl-CoA carboxylase is a heterohexamer composed of biotin carboxyl carrier protein (AccB), biotin carboxylase (AccC) and two subunits each of ACCase subunit alpha (AccA) and ACCase subunit beta (AccD).

Its subcellular location is the cytoplasm. The enzyme catalyses N(6)-carboxybiotinyl-L-lysyl-[protein] + acetyl-CoA = N(6)-biotinyl-L-lysyl-[protein] + malonyl-CoA. Its pathway is lipid metabolism; malonyl-CoA biosynthesis; malonyl-CoA from acetyl-CoA: step 1/1. In terms of biological role, component of the acetyl coenzyme A carboxylase (ACC) complex. Biotin carboxylase (BC) catalyzes the carboxylation of biotin on its carrier protein (BCCP) and then the CO(2) group is transferred by the transcarboxylase to acetyl-CoA to form malonyl-CoA. This chain is Acetyl-coenzyme A carboxylase carboxyl transferase subunit beta, found in Flavobacterium psychrophilum (strain ATCC 49511 / DSM 21280 / CIP 103535 / JIP02/86).